Reading from the N-terminus, the 1026-residue chain is Multidrug resistance protein MdtC (1026 aa).

Helical transmembrane passes span 15–35 (ILIA…LPVA), 333–353 (EVEE…FLFL), 360–380 (LIPA…MYLC), 387–407 (LSLM…IVVL), 431–451 (VGFT…PLLL), 463–483 (FAVT…TLTP), 528–548 (LVGV…IAIP), 853–873 (LILI…LYES), 897–917 (LFNA…IGIV), 953–973 (PIMM…LSGG), and 984–1004 (ITIV…TPVV).

It belongs to the resistance-nodulation-cell division (RND) (TC 2.A.6) family. MdtC subfamily. As to quaternary structure, part of a tripartite efflux system composed of MdtA, MdtB and MdtC. MdtC forms a heteromultimer with MdtB.

It is found in the cell inner membrane. The polypeptide is Multidrug resistance protein MdtC (Salmonella arizonae (strain ATCC BAA-731 / CDC346-86 / RSK2980)).